Here is a 149-residue protein sequence, read N- to C-terminus: FAD synthase (149 aa).

Residues 9-10, 14-17, D93, and Y120 contribute to the ATP site; these read VF and HPGH.

The protein belongs to the archaeal FAD synthase family. In terms of assembly, homodimer. It depends on a divalent metal cation as a cofactor.

It catalyses the reaction FMN + ATP + H(+) = FAD + diphosphate. Its pathway is cofactor biosynthesis; FAD biosynthesis; FAD from FMN: step 1/1. Functionally, catalyzes the transfer of the AMP portion of ATP to flavin mononucleotide (FMN) to produce flavin adenine dinucleotide (FAD) coenzyme. This is FAD synthase from Aciduliprofundum boonei (strain DSM 19572 / T469).